The primary structure comprises 236 residues: UPF0257 lipoprotein YnfC (236 aa).

Positions 1 to 16 (MKYKLLPCLLAILLTG) are cleaved as a signal peptide. The N-palmitoyl cysteine moiety is linked to residue C17. C17 is lipidated: S-diacylglycerol cysteine.

Belongs to the UPF0257 family.

The protein resides in the cell membrane. This chain is UPF0257 lipoprotein YnfC, found in Escherichia coli O45:K1 (strain S88 / ExPEC).